The primary structure comprises 798 residues: Integrin beta-1 (798 aa).

An N-terminal signal peptide occupies residues 1-20 (MNLQPIFWIGLISSICCVFA). One can recognise a PSI domain in the interval 26–76 (RCLKANAKSCGECIQAGPNCGWCTNSTFLQEGMPTSARCDDLEALKKKGCP). Disulfide bonds link cysteine 27–cysteine 45, cysteine 35–cysteine 464, cysteine 38–cysteine 64, cysteine 48–cysteine 75, cysteine 207–cysteine 213, cysteine 261–cysteine 301, cysteine 401–cysteine 415, cysteine 435–cysteine 462, cysteine 466–cysteine 486, cysteine 477–cysteine 489, cysteine 491–cysteine 500, cysteine 502–cysteine 533, cysteine 516–cysteine 531, cysteine 525–cysteine 536, cysteine 538–cysteine 553, cysteine 555–cysteine 576, cysteine 560–cysteine 574, cysteine 568–cysteine 579, cysteine 581–cysteine 590, cysteine 592–cysteine 615, cysteine 599–cysteine 613, cysteine 607–cysteine 618, cysteine 620–cysteine 630, cysteine 633–cysteine 636, cysteine 640–cysteine 691, cysteine 646–cysteine 665, cysteine 649–cysteine 661, and cysteine 699–cysteine 723. A glycan (N-linked (GlcNAc...) asparagine) is linked at asparagine 50. The interval 75-107 (CPPDDIENPRGSKDIKKNKNVTNRSKGTAEKLK) is disordered. Basic and acidic residues predominate over residues 81–91 (ENPRGSKDIKK). N-linked (GlcNAc...) asparagine glycosylation is found at asparagine 94 and asparagine 97. A VWFA domain is found at 140-378 (DYPIDLYYLM…QLIIDAYNSL (239 aa)). Mg(2+)-binding residues include serine 152 and serine 154. The Ca(2+) site is built by serine 154, aspartate 157, aspartate 158, and glutamate 189. Positions 207-213 (CTSEQNC) are CX3CL1-binding. A glycan (N-linked (GlcNAc...) asparagine) is linked at asparagine 212. Ca(2+) contacts are provided by asparagine 244, aspartate 246, proline 248, and glutamate 249. Glutamate 249 contacts Mg(2+). The N-linked (GlcNAc...) asparagine glycan is linked to asparagine 269. A CX3CL1-binding region spans residues 295–314 (LPNDGQCHLENNMYTMSHYY). Alanine 362 serves as a coordination point for Ca(2+). N-linked (GlcNAc...) asparagine glycans are attached at residues asparagine 363, asparagine 406, and asparagine 417. An interaction with TMEM182 region spans residues 383–465 (ILENSKLSEG…VILQYICECE (83 aa)). I-EGF domains lie at 466–501 (CQSE…RHCE), 502–554 (CSTD…KFCE), 555–591 (CDNF…SACD), and 592–631 (CSLD…QTCE). Residue asparagine 481 is glycosylated (N-linked (GlcNAc...) asparagine). Asparagine 520 carries N-linked (GlcNAc...) asparagine glycosylation. N-linked (GlcNAc...) asparagine glycosylation occurs at asparagine 584. Asparagine 669 carries N-linked (GlcNAc...) asparagine glycosylation. Residues 729–749 (IIPIVAGVVAGIVLIGLALLL) form a helical membrane-spanning segment. Residues 762 to 767 (EFAKFE) are signal for sorting from recycling endosomes; interaction with ACAP1. A Phosphothreonine modification is found at threonine 777. Position 783 is a phosphotyrosine (tyrosine 783). The residue at position 785 (serine 785) is a Phosphoserine. Residues 785-792 (SAVTTVVN) are interaction with ITGB1BP1. Phosphothreonine is present on threonine 789. Residue lysine 794 is modified to N6-acetyllysine; alternate. Lysine 794 is covalently cross-linked (Glycyl lysine isopeptide (Lys-Gly) (interchain with G-Cter in SUMO1); alternate).

Belongs to the integrin beta chain family. In terms of assembly, interacts with seprase FAP (seprase); the interaction occurs at the cell surface of invadopodia membrane in a collagen-dependent manner. Heterodimer of an alpha and a beta subunit. Beta-1 associates with either alpha-1, alpha-2, alpha-3, alpha-4, alpha-5, alpha-6, alpha-7, alpha-8, alpha-9, alpha-10, alpha-11 or alpha-V. ITGA6:ITGB1 is found in a complex with CD9; interaction takes place in oocytes and is involved in sperm-egg fusion. Binds LGALS3BP and NMRK2, when associated with alpha-7, but not with alpha-5. Interacts with FLNA, FLNB, FLNC and RANBP9. Interacts with KRT1 in the presence of RACK1 and SRC. Interacts with JAML; integrin alpha-4/beta-1 may regulate leukocyte to endothelial cells adhesion by controlling JAML homodimerization. Interacts with RAB21. Interacts (via the cytoplasmic region) with RAB25 (via the hypervariable C-terminal region). Interacts with MYO10. Interacts with ITGB1BP1 (via C-terminal region); the interaction is a prerequisite for focal adhesion disassembly. Interacts with TLN1; the interaction is prevented by competitive binding of ITGB1BP1. Interacts with ACAP1; required for ITGB1 recycling. Interacts with ASAP3. Interacts with FERMT2; the interaction is inhibited in presence of ITGB1BP1. Interacts with DAB2. Interacts with FGR and HCK. Interacts with alpha-7A and alpha-7B in adult skeletal muscle. Interacts with alpha-7B in cardiomyocytes of adult heart. Interacts with EMP2; the interaction may be direct or indirect and ITGB1 has a heterodimer form. ITGA5:ITGB1 interacts with CCN3. ITGA4:ITGB1 is found in a ternary complex with CX3CR1 and CX3CL1. ITGA5:ITGB1 interacts with FBN1. ITGA5:ITGB1 acts as a receptor for fibronectin FN1 and mediates R-G-D-dependent cell adhesion to FN1. ITGA5:ITGB1 interacts with IL1B. Interacts with MDK. ITGA4:ITGB1 interacts with MDK; this interaction mediates MDK-induced osteoblast cells migration through PXN phosphorylation. ITGA6:ITGB1 interacts with MDK; this interaction mediates MDK-induced neurite-outgrowth. ITGA5:ITGB1 interacts with ACE2. Interacts with TMEM182 and LAMB1. Interacts with tensin TNS3; TNS3 also interacts with PEAK1, thus acting as an adapter molecule to bridge the association of PEAK1 with ITGB1. Interacts with tensin TNS4; the interaction displaces tensin TNS3 from the ITGB1 cytoplasmic tail and promotes ITGB1 stability. Integrin ITGA9:ITGB1 interacts with SPP1/OPN (via N-terminus). Integrin ITGA9:ITGB1 interacts with TNC/TNFN3 (via the 3rd Fibronectin type-III domain). Integrins ITGA4:ITGB1 and ITGA9:ITGB1 interact with SVEP1 (via Sushi domain 21); thereby inhibit Ca(2+) intracellular signaling and as a result repress vasocontraction. ITGA4:ITGB1 and ITGA5:ITGB1 interacts with SELP. Interacts with CD248. ITGA5:ITGB1 interacts with IGFBP1. ITGA4:ITGB1 interacts with BCAM. Interacts with ADGRG6.

The protein localises to the cell membrane. It localises to the cell projection. The protein resides in the invadopodium membrane. Its subcellular location is the ruffle membrane. It is found in the recycling endosome. The protein localises to the melanosome. It localises to the lamellipodium. The protein resides in the ruffle. Its subcellular location is the cell junction. It is found in the focal adhesion. In terms of biological role, integrins alpha-1/beta-1, alpha-2/beta-1, alpha-10/beta-1 and alpha-11/beta-1 are receptors for collagen. Integrins alpha-1/beta-1 and alpha-2/beta-2 recognize the proline-hydroxylated sequence G-F-P-G-E-R in collagen. Integrins alpha-2/beta-1, alpha-3/beta-1, alpha-4/beta-1, alpha-5/beta-1, alpha-8/beta-1, alpha-10/beta-1, alpha-11/beta-1 and alpha-V/beta-1 are receptors for fibronectin. Alpha-4/beta-1 recognizes one or more domains within the alternatively spliced CS-1 and CS-5 regions of fibronectin. Integrin alpha-5/beta-1 is a receptor for fibrinogen. Integrin alpha-1/beta-1, alpha-2/beta-1, alpha-6/beta-1 and alpha-7/beta-1 are receptors for lamimin. Integrin alpha-6/beta-1 (ITGA6:ITGB1) is present in oocytes and is involved in sperm-egg fusion. Integrin alpha-4/beta-1 is a receptor for VCAM1 and recognizes the sequence Q-I-D-S in VCAM1. Integrin alpha-9/beta-1 is a receptor for VCAM1, cytotactin and osteopontin. It recognizes the sequence A-E-I-D-G-I-E-L in cytotactin. Integrin alpha-3/beta-1 is a receptor for epiligrin, thrombospondin and CSPG4. Integrin alpha-3/beta-1 provides a docking site for FAP (seprase) at invadopodia plasma membranes in a collagen-dependent manner and hence may participate in the adhesion, formation of invadopodia and matrix degradation processes, promoting cell invasion. Alpha-3/beta-1 may mediate with LGALS3 the stimulation by CSPG4 of endothelial cells migration. Integrin alpha-V/beta-1 is a receptor for vitronectin. Beta-1 integrins recognize the sequence R-G-D in a wide array of ligands. When associated with alpha-7/beta-1 integrin, regulates cell adhesion and laminin matrix deposition. Involved in promoting endothelial cell motility and angiogenesis. Involved in osteoblast compaction through the fibronectin fibrillogenesis cell-mediated matrix assembly process and the formation of mineralized bone nodules. May be involved in up-regulation of the activity of kinases such as PKC via binding to KRT1. Together with KRT1 and RACK1, serves as a platform for SRC activation or inactivation. Plays a mechanistic adhesive role during telophase, required for the successful completion of cytokinesis. ITGA4:ITGB1 binds to fractalkine (CX3CL1) and may act as its coreceptor in CX3CR1-dependent fractalkine signaling. ITGA4:ITGB1 and ITGA5:ITGB1 bind to PLA2G2A via a site (site 2) which is distinct from the classical ligand-binding site (site 1) and this induces integrin conformational changes and enhanced ligand binding to site 1. ITGA5:ITGB1 acts as a receptor for fibrillin-1 (FBN1) and mediates R-G-D-dependent cell adhesion to FBN1. ITGA5:ITGB1 is a receptor for IL1B and binding is essential for IL1B signaling. ITGA5:ITGB3 is a receptor for soluble CD40LG and is required for CD40/CD40LG signaling. Plays an important role in myoblast differentiation and fusion during skeletal myogenesis. ITGA9:ITGB1 may play a crucial role in SVEP1/polydom-mediated myoblast cell adhesion. Integrins ITGA9:ITGB1 and ITGA4:ITGB1 repress PRKCA-mediated L-type voltage-gated channel Ca(2+) influx and ROCK-mediated calcium sensitivity in vascular smooth muscle cells via their interaction with SVEP1, thereby inhibit vasocontraction. The sequence is that of Integrin beta-1 (ITGB1) from Pongo abelii (Sumatran orangutan).